A 114-amino-acid polypeptide reads, in one-letter code: Nascent polypeptide-associated complex protein (114 aa).

The NAC-A/B domain maps to 5–69 (PSQFKNLERM…AKEAQKEEPK (65 aa)).

It belongs to the NAC-alpha family. In terms of assembly, homodimer. Interacts with the ribosome. Binds ribosomal RNA.

In terms of biological role, contacts the emerging nascent chain on the ribosome. This Sulfurisphaera tokodaii (strain DSM 16993 / JCM 10545 / NBRC 100140 / 7) (Sulfolobus tokodaii) protein is Nascent polypeptide-associated complex protein.